A 1740-amino-acid polypeptide reads, in one-letter code: Vitamin B12-dependent ribonucleoside-diphosphate reductase (1740 aa).

In terms of domain architecture, ATP-cone spans 4–96; that stretch reads EKVMKRDGRI…LYRKKKAEIR (93 aa). Residues threonine 257, 272–273, and glycine 301 each bind substrate; that span reads AC. Cysteine 273 and cysteine 1308 are oxidised to a cystine. A DOD-type homing endonuclease 1 domain is found at 443-582; that stretch reads LAGFIAGDGC…VTHYLNALGI (140 aa). The active-site Proton acceptor is asparagine 913. 913–914 provides a ligand contact to substrate; sequence NP. The DOD-type homing endonuclease 2 domain occupies 1063–1194; the sequence is VLGWFIGDGY…VQDLLLLFGI (132 aa). Cysteine 1297 serves as the catalytic Cysteine radical intermediate. Residues 1297-1299 and 1471-1475 contribute to the substrate site; these read CGE and PTGSV. The active-site Proton acceptor is the glutamate 1299.

The protein belongs to the ribonucleoside diphosphate reductase class-2 family. Requires adenosylcob(III)alamin as cofactor. This protein undergoes a protein self splicing that involves a post-translational excision of the intervening region (intein) followed by peptide ligation.

It carries out the reaction a 2'-deoxyribonucleoside 5'-diphosphate + [thioredoxin]-disulfide + H2O = a ribonucleoside 5'-diphosphate + [thioredoxin]-dithiol. Provides the precursors necessary for DNA synthesis. Catalyzes the biosynthesis of deoxyribonucleotides from the corresponding ribonucleotides. This chain is Vitamin B12-dependent ribonucleoside-diphosphate reductase (rnr), found in Pyrococcus furiosus (strain ATCC 43587 / DSM 3638 / JCM 8422 / Vc1).